The chain runs to 247 residues: Glucosamine-6-phosphate deaminase (247 aa).

The Proton acceptor; for enolization step role is filled by Asp-67. Asn-136 functions as the For ring-opening step in the catalytic mechanism. Catalysis depends on His-138, which acts as the Proton acceptor; for ring-opening step. Catalysis depends on Glu-143, which acts as the For ring-opening step.

This sequence belongs to the glucosamine/galactosamine-6-phosphate isomerase family. NagB subfamily.

It catalyses the reaction alpha-D-glucosamine 6-phosphate + H2O = beta-D-fructose 6-phosphate + NH4(+). It functions in the pathway amino-sugar metabolism; N-acetylneuraminate degradation; D-fructose 6-phosphate from N-acetylneuraminate: step 5/5. Its function is as follows. Catalyzes the reversible isomerization-deamination of glucosamine 6-phosphate (GlcN6P) to form fructose 6-phosphate (Fru6P) and ammonium ion. This is Glucosamine-6-phosphate deaminase from Shouchella clausii (strain KSM-K16) (Alkalihalobacillus clausii).